The chain runs to 292 residues: Intermediate transcription factor 3 small subunit (292 aa).

The protein belongs to the orthopoxvirus OPG134 family. Heterodimer of a 45 kDa (A23R) and a 32 kDa (A8R) subunit to form the virus intermediate transcription factor (VITF)-3.

Acts with RNA polymerase to initiate transcription from intermediate gene promoters. In Monkeypox virus, this protein is Intermediate transcription factor 3 small subunit (OPG134).